The sequence spans 323 residues: Fructose-1,6-bisphosphatase class 1 (323 aa).

Mg(2+) is bound by residues glutamate 93, aspartate 114, leucine 116, and aspartate 117. Residues 117 to 120 (DGSS), asparagine 205, tyrosine 233, and lysine 263 contribute to the substrate site. Residue glutamate 269 participates in Mg(2+) binding.

The protein belongs to the FBPase class 1 family. As to quaternary structure, homotetramer. Mg(2+) is required as a cofactor.

It is found in the cytoplasm. The enzyme catalyses beta-D-fructose 1,6-bisphosphate + H2O = beta-D-fructose 6-phosphate + phosphate. Its pathway is carbohydrate biosynthesis; gluconeogenesis. This chain is Fructose-1,6-bisphosphatase class 1, found in Sulfurihydrogenibium sp. (strain YO3AOP1).